The chain runs to 392 residues: MTTVGTALRPNATRVMLLGSGELGKEVALECQRLGVEVIAVDRYADAPAMQVAHRSHVIDMLDGAALAALIADEKPDFVVPEIEAIATDMLVELEKQGQHVVPTARAAKLTMDREGIRRLAAEELWVPTSDYRFADGYDAFQAAAEAIGFPCIVKPVMSSSGKGQSFIREASQLMAAWEYAQQGGRAGAGRVIVEGVVKFDFEITLLTISAVDGIHFCAPIGHRQEDGDYRESWQPQHMSELALQRARQVAEKVVTALGGHGLFGVELFVCGDEVVFSEVSPRPHDTGMVTLISQDVSEFALHVRAFLGLPVGAIRQYGPAASAVILPELDSDNVQYANLSAAVGAGLQLRLFGKPHIQGKRRLGVALATGLDIDEAVQRAVSAANGVKVSG.

N(1)-(5-phospho-beta-D-ribosyl)glycinamide-binding positions include 22 to 23 and E82; that span reads EL. ATP contacts are provided by residues R114, K155, 160 to 165, 195 to 198, and E203; these read SSGKGQ and EGVV. Residues 119–308 form the ATP-grasp domain; it reads RLAAEELWVP…EFALHVRAFL (190 aa). Residues E267 and E279 each contribute to the Mg(2+) site. N(1)-(5-phospho-beta-D-ribosyl)glycinamide is bound by residues D286, K355, and 362–363; that span reads RR.

It belongs to the PurK/PurT family. Homodimer.

The catalysed reaction is N(1)-(5-phospho-beta-D-ribosyl)glycinamide + formate + ATP = N(2)-formyl-N(1)-(5-phospho-beta-D-ribosyl)glycinamide + ADP + phosphate + H(+). Its pathway is purine metabolism; IMP biosynthesis via de novo pathway; N(2)-formyl-N(1)-(5-phospho-D-ribosyl)glycinamide from N(1)-(5-phospho-D-ribosyl)glycinamide (formate route): step 1/1. Functionally, involved in the de novo purine biosynthesis. Catalyzes the transfer of formate to 5-phospho-ribosyl-glycinamide (GAR), producing 5-phospho-ribosyl-N-formylglycinamide (FGAR). Formate is provided by PurU via hydrolysis of 10-formyl-tetrahydrofolate. This Erwinia tasmaniensis (strain DSM 17950 / CFBP 7177 / CIP 109463 / NCPPB 4357 / Et1/99) protein is Formate-dependent phosphoribosylglycinamide formyltransferase.